Consider the following 91-residue polypeptide: ATP synthase subunit c (91 aa).

A run of 2 helical transmembrane segments spans residues 4–24 and 53–73; these read FTMCMLAAGFGMAIGAFGTGI and IGLAMIESLAIYVLVVCLIIL.

Belongs to the ATPase C chain family. F-type ATPases have 2 components, F(1) - the catalytic core - and F(0) - the membrane proton channel. F(1) has five subunits: alpha(3), beta(3), gamma(1), delta(1), epsilon(1). F(0) has three main subunits: a(1), b(2) and c(10-14). The alpha and beta chains form an alternating ring which encloses part of the gamma chain. F(1) is attached to F(0) by a central stalk formed by the gamma and epsilon chains, while a peripheral stalk is formed by the delta and b chains.

The protein resides in the cell inner membrane. F(1)F(0) ATP synthase produces ATP from ADP in the presence of a proton or sodium gradient. F-type ATPases consist of two structural domains, F(1) containing the extramembraneous catalytic core and F(0) containing the membrane proton channel, linked together by a central stalk and a peripheral stalk. During catalysis, ATP synthesis in the catalytic domain of F(1) is coupled via a rotary mechanism of the central stalk subunits to proton translocation. Its function is as follows. Key component of the F(0) channel; it plays a direct role in translocation across the membrane. A homomeric c-ring of between 10-14 subunits forms the central stalk rotor element with the F(1) delta and epsilon subunits. In Trichlorobacter lovleyi (strain ATCC BAA-1151 / DSM 17278 / SZ) (Geobacter lovleyi), this protein is ATP synthase subunit c.